The sequence spans 237 residues: UPF0280 protein Mthe_1297 (237 aa).

This sequence belongs to the UPF0280 family.

The sequence is that of UPF0280 protein Mthe_1297 from Methanothrix thermoacetophila (strain DSM 6194 / JCM 14653 / NBRC 101360 / PT) (Methanosaeta thermophila).